Consider the following 876-residue polypeptide: Pre-mRNA-splicing factor ATP-dependent RNA helicase-like protein PRP2 (876 aa).

Residues 1-111 (MSSITSETGK…KGLLGDSENE (111 aa)) are disordered. S2 carries the N-acetylserine modification. A compositionally biased stretch (polar residues) spans 61–70 (VFSNTNQGPE). The Helicase ATP-binding domain maps to 233-399 (LQEIKKNQVL…FDNCPIFNVP (167 aa)). 246–253 (GETGSGKT) provides a ligand contact to ATP. Positions 346–349 (DEAH) match the DEAH box motif. The region spanning 424 to 598 (TIFQIHTTQS…NTVLLLLSLG (175 aa)) is the Helicase C-terminal domain.

This sequence belongs to the DEAD box helicase family. DEAH subfamily. In terms of assembly, interacts directly with pre-mRNA. According to PubMed:2251118, associated with spliceosomes prior to and throughout step 1 of the splicing reaction. According to PubMed:8943336, it leaves the spliceosome before reaction 1. Interacts with SPP2.

Its subcellular location is the nucleus. It catalyses the reaction ATP + H2O = ADP + phosphate + H(+). Functionally, involved in pre-mRNA splicing. Is required together with ATP and at least one other factor, for the first cleavage-ligation reaction. Functions as a molecular motor in the activation of the precatalytic spliceosome for the first transesterification reaction of pre-mRNA splicing by hydrolyzing ATP to cause the activation of the spliceosome without the occurrence of splicing. Capable of hydrolyzing nucleoside triphosphates in the presence of single-stranded RNAs such as poly(U). This Saccharomyces cerevisiae (strain ATCC 204508 / S288c) (Baker's yeast) protein is Pre-mRNA-splicing factor ATP-dependent RNA helicase-like protein PRP2 (PRP2).